We begin with the raw amino-acid sequence, 144 residues long: Cytochrome c oxidase subunit 4 isoform 1, mitochondrial (144 aa).

Over 1-73 the chain is Mitochondrial matrix; the sequence is SVVKSEDFSL…SFAEMNRGSN (73 aa). Lys-4 is subject to N6-acetyllysine; alternate. N6-succinyllysine; alternate is present on Lys-4. At Lys-28 the chain carries N6-acetyllysine. 2 positions are modified to phosphoserine: Ser-31 and Ser-33. The residue at position 35 (Lys-35) is an N6-acetyllysine; alternate. Lys-35 carries the N6-succinyllysine; alternate modification. N6-acetyllysine is present on Lys-42. The helical transmembrane segment at 74–99 threads the bilayer; it reads EWKTVVGGAMFFIGFTALIIMWQKRH. Topologically, residues 100 to 144 are mitochondrial intermembrane; sequence VYGPLPQSFDKEWVAKQTKRMLDMKVNPIQGLASKWDYEKNEWKK.

The protein belongs to the cytochrome c oxidase IV family. Component of the cytochrome c oxidase (complex IV, CIV), a multisubunit enzyme composed of 14 subunits. The complex is composed of a catalytic core of 3 subunits MT-CO1, MT-CO2 and MT-CO3, encoded in the mitochondrial DNA, and 11 supernumerary subunits COX4I, COX5A, COX5B, COX6A, COX6B, COX6C, COX7A, COX7B, COX7C, COX8 and NDUFA4, which are encoded in the nuclear genome. The complex exists as a monomer or a dimer and forms supercomplexes (SCs) in the inner mitochondrial membrane with NADH-ubiquinone oxidoreductase (complex I, CI) and ubiquinol-cytochrome c oxidoreductase (cytochrome b-c1 complex, complex III, CIII), resulting in different assemblies (supercomplex SCI(1)III(2)IV(1) and megacomplex MCI(2)III(2)IV(2)). Interacts with PHB2; the interaction decreases in absence of SPHK2. Interacts with AFG1L. Interacts with ABCB7; this interaction allows the regulation of cellular iron homeostasis and cellular reactive oxygen species (ROS) levels in cardiomyocytes. Interacts with FLVCR2; this interaction occurs in the absence of heme and is disrupted upon heme binding. Interacts with IRGC.

It localises to the mitochondrion inner membrane. Its pathway is energy metabolism; oxidative phosphorylation. Component of the cytochrome c oxidase, the last enzyme in the mitochondrial electron transport chain which drives oxidative phosphorylation. The respiratory chain contains 3 multisubunit complexes succinate dehydrogenase (complex II, CII), ubiquinol-cytochrome c oxidoreductase (cytochrome b-c1 complex, complex III, CIII) and cytochrome c oxidase (complex IV, CIV), that cooperate to transfer electrons derived from NADH and succinate to molecular oxygen, creating an electrochemical gradient over the inner membrane that drives transmembrane transport and the ATP synthase. Cytochrome c oxidase is the component of the respiratory chain that catalyzes the reduction of oxygen to water. Electrons originating from reduced cytochrome c in the intermembrane space (IMS) are transferred via the dinuclear copper A center (CU(A)) of subunit 2 and heme A of subunit 1 to the active site in subunit 1, a binuclear center (BNC) formed by heme A3 and copper B (CU(B)). The BNC reduces molecular oxygen to 2 water molecules using 4 electrons from cytochrome c in the IMS and 4 protons from the mitochondrial matrix. This chain is Cytochrome c oxidase subunit 4 isoform 1, mitochondrial (COX4I1), found in Pongo pygmaeus (Bornean orangutan).